The following is a 30-amino-acid chain: MSILPVIFLPIFFYSSFVQTFNASECIDKG.

A signal peptide spans 1-18 (MSILPVIFLPIFFYSSFV).

The protein belongs to the interleukin-1 receptor family.

This Vaccinia virus (strain Copenhagen) (VACV) protein is Truncated interleukin-1-binding protein.